Here is a 119-residue protein sequence, read N- to C-terminus: Beta-2-microglobulin (119 aa).

An N-terminal signal peptide occupies residues 1-20 (MARFVVVALLVLLSLSGLEA). The region spanning 25–114 (PKIQVYSRHP…VTLSTPKTVK (90 aa)) is the Ig-like C1-type domain. A disulfide bridge links Cys-45 with Cys-100.

It belongs to the beta-2-microglobulin family. Heterodimer of an alpha chain and a beta chain. Beta-2-microglobulin is the beta-chain of major histocompatibility complex class I molecules.

Its subcellular location is the secreted. In terms of biological role, component of the class I major histocompatibility complex (MHC). Involved in the presentation of peptide antigens to the immune system. In Aotus azarae (Azara's night monkey), this protein is Beta-2-microglobulin (B2M).